A 490-amino-acid polypeptide reads, in one-letter code: MANPLHLVLLGAALAGLLLSGSSVFISRRAANDVLARTRRANSFLEELKKGNLERECMEENCSYEEALEVFEDREKTNEFWNKYVDGDQCESNPCQNQGTCKDGLGMYTCSCVEGYEGQDCEPVTRKLCSLDNGGCDQFCKEEENSVLCSCASGYTLGDNGKSCISTELFPCGKVTLGRWRRSPATNSSEGPPEAPGPEQQDDGNLTATENPFNLLDSPEPPPEDDSSSLVRIVGGQDCRDGECPWQALLVNEENEGFCGGTILSEYHVLTAAHCLHQAKRFKVRVGDRDTEHEEGNEETHEVEVVVKHNRFVKETYDFDIAVLRLKTPITFRRNVAPACLPQKDWAESTLMAQKTGIVSGFGRTHEMGRLSTTLKMLEVPYVDRNSCKRSSSFTITQNMFCAGYDARPEDACQGDSGGPHVTRFRDTYFVTGIVSWGEGCARKGKFGVYTKVSNFLKWIEKSMRARAVPVAEAAGTPGPTQPTIKGSPS.

The N-terminal stretch at 1 to 20 is a signal peptide; that stretch reads MANPLHLVLLGAALAGLLLS. The propeptide occupies 21 to 40; the sequence is GSSVFISRRAANDVLARTRR. A Gla domain is found at 41 to 85; the sequence is ANSFLEELKKGNLERECMEENCSYEEALEVFEDREKTNEFWNKYV. 6 positions are modified to 4-carboxyglutamate: Glu46, Glu47, Glu54, Glu56, Glu59, and Glu60. Cys57 and Cys62 are joined by a disulfide. The N-linked (GlcNAc...) asparagine glycan is linked to Asn61. 6 positions are modified to 4-carboxyglutamate: Glu65, Glu66, Glu69, Glu72, Glu75, and Glu79. An EGF-like 1; calcium-binding domain is found at 86 to 122; it reads DGDQCESNPCQNQGTCKDGLGMYTCSCVEGYEGQDCE. 11 disulfides stabilise this stretch: Cys90–Cys101, Cys95–Cys110, Cys112–Cys121, Cys129–Cys140, Cys136–Cys149, Cys151–Cys164, Cys172–Cys340, Cys239–Cys244, Cys259–Cys275, Cys388–Cys402, and Cys413–Cys441. Position 103 is a (3R)-3-hydroxyaspartate (Asp103). One can recognise an EGF-like 2 domain in the interval 125–165; the sequence is TRKLCSLDNGGCDQFCKEEENSVLCSCASGYTLGDNGKSCI. Residues 183-230 form a disordered region; that stretch reads SPATNSSEGPPEAPGPEQQDDGNLTATENPFNLLDSPEPPPEDDSSSL. Residues 184–232 constitute a propeptide, activation peptide; the sequence is PATNSSEGPPEAPGPEQQDDGNLTATENPFNLLDSPEPPPEDDSSSLVR. N-linked (GlcNAc...) asparagine glycans are attached at residues Asn187 and Asn205. Positions 203–212 are enriched in polar residues; that stretch reads DGNLTATENP. The Peptidase S1 domain maps to 233–465; sequence IVGGQDCRDG…FLKWIEKSMR (233 aa). Residues His274 and Asp320 each act as charge relay system in the active site. Residue Ser417 is the Charge relay system of the active site.

The protein belongs to the peptidase S1 family. The two chains are formed from a single-chain precursor by the excision of two Arg residues and are held together by 1 or more disulfide bonds. Forms a heterodimer with SERPINA5. In terms of processing, the vitamin K-dependent, enzymatic carboxylation of some glutamate residues allows the modified protein to bind calcium. N- and O-glycosylated. Post-translationally, proteolytically cleaved and activated by cathepsin CTSG. The activation peptide is cleaved by factor IXa (in the intrinsic pathway), or by factor VIIa (in the extrinsic pathway). In terms of processing, the iron and 2-oxoglutarate dependent 3-hydroxylation of aspartate and asparagine is (R) stereospecific within EGF domains.

The protein resides in the secreted. The catalysed reaction is Selective cleavage of Arg-|-Thr and then Arg-|-Ile bonds in prothrombin to form thrombin.. With respect to regulation, inhibited by SERPINA5. In terms of biological role, factor Xa is a vitamin K-dependent glycoprotein that converts prothrombin to thrombin in the presence of factor Va, calcium and phospholipid during blood clotting. Factor Xa activates pro-inflammatory signaling pathways in a protease-activated receptor (PAR)-dependent manner. This is Coagulation factor X (F10) from Oryctolagus cuniculus (Rabbit).